A 492-amino-acid polypeptide reads, in one-letter code: Proline--tRNA ligase (492 aa).

Belongs to the class-II aminoacyl-tRNA synthetase family. ProS type 3 subfamily. As to quaternary structure, homodimer.

The protein resides in the cytoplasm. The catalysed reaction is tRNA(Pro) + L-proline + ATP = L-prolyl-tRNA(Pro) + AMP + diphosphate. In terms of biological role, catalyzes the attachment of proline to tRNA(Pro) in a two-step reaction: proline is first activated by ATP to form Pro-AMP and then transferred to the acceptor end of tRNA(Pro). The chain is Proline--tRNA ligase from Christiangramia forsetii (strain DSM 17595 / CGMCC 1.15422 / KT0803) (Gramella forsetii).